The sequence spans 470 residues: Flavin-containing monooxygenase FMO GS-OX-like 6 (470 aa).

An FAD-binding site is contributed by 17–22 (GAGAAG). An NADP(+)-binding site is contributed by 214–219 (GYQSSG).

It belongs to the FMO family. It depends on FAD as a cofactor.

In terms of biological role, catalyzes the conversion of methylthioalkyl glucosinolates of any chain length into methylsulfinylalkyl glucosinolates. The sequence is that of Flavin-containing monooxygenase FMO GS-OX-like 6 from Arabidopsis thaliana (Mouse-ear cress).